The chain runs to 133 residues: Thioredoxin-2, mitochondrial (133 aa).

The transit peptide at 1 to 29 directs the protein to the mitochondrion; the sequence is MRGFIANSLKPHMRSFALRRSFTSSRILR. A Thioredoxin domain is found at 30-133; sequence KVNAVESFGD…LSSLLAKYQE (104 aa). Active-site nucleophile residues include Cys59 and Cys62. Cys59 and Cys62 form a disulfide bridge.

Belongs to the thioredoxin family. As to quaternary structure, interacts with arg3.

The protein localises to the mitochondrion. Functionally, disulfide reductase which serves multiple functions in mitochondria, protecting mitochondrial components against thiol-oxidative damage as a thiol-disulfide oxidoreductase, and supporting urea cycle and respiration in mitochondria in a manner independent of active site thiols. The protein is Thioredoxin-2, mitochondrial (trx2) of Schizosaccharomyces pombe (strain 972 / ATCC 24843) (Fission yeast).